The following is a 277-amino-acid chain: Large ribosomal subunit protein uL2 (277 aa).

Disordered stretches follow at residues 37–60 (KNST…GHKH) and 223–265 (VVMN…KRTD). Over residues 39–49 (STAGRNNNGHI) the composition is skewed to polar residues. Over residues 50–60 (TTRHKGGGHKH) the composition is skewed to basic residues. Residues 229 to 244 (DHPHGGGEGRTGEARE) show a composition bias toward basic and acidic residues.

It belongs to the universal ribosomal protein uL2 family. In terms of assembly, part of the 50S ribosomal subunit. Forms a bridge to the 30S subunit in the 70S ribosome.

Functionally, one of the primary rRNA binding proteins. Required for association of the 30S and 50S subunits to form the 70S ribosome, for tRNA binding and peptide bond formation. It has been suggested to have peptidyltransferase activity; this is somewhat controversial. Makes several contacts with the 16S rRNA in the 70S ribosome. The chain is Large ribosomal subunit protein uL2 from Neisseria meningitidis serogroup A / serotype 4A (strain DSM 15465 / Z2491).